A 355-amino-acid polypeptide reads, in one-letter code: Trans-3-hydroxy-L-proline dehydratase (355 aa).

Residue C111 is the Proton acceptor of the active site. Substrate contacts are provided by residues 112–113 (GH) and 276–277 (GS).

The protein belongs to the proline racemase family. Homodimer.

The catalysed reaction is trans-3-hydroxy-L-proline = 1-pyrroline-2-carboxylate + H2O. Catalyzes the dehydration of trans-3-hydroxy-L-proline (t3LHyp) to Delta(1)-pyrroline-2-carboxylate (Pyr2C). Together with LhpI, is involved in a metabolic pathway that converts t3LHyp to L-proline. This chain is Trans-3-hydroxy-L-proline dehydratase, found in Colwellia psychrerythraea (strain 34H / ATCC BAA-681) (Vibrio psychroerythus).